The sequence spans 102 residues: Chorion protein S15 (102 aa).

An N-terminal signal peptide occupies residues 1–18 (MKFLIAFVAIAFFACVSA).

It belongs to the chorion protein S15/S18 family.

Its subcellular location is the secreted. Functionally, chorion membrane (egg shell) protein; plays a role in protecting the egg from the environment. The chain is Chorion protein S15 (Cp15) from Drosophila grimshawi (Hawaiian fruit fly).